Reading from the N-terminus, the 283-residue chain is tRNA dimethylallyltransferase (283 aa).

The segment at 5 to 8 (DSML) is interaction with substrate tRNA.

The protein belongs to the IPP transferase family. As to quaternary structure, monomer. It depends on Mg(2+) as a cofactor.

It carries out the reaction adenosine(37) in tRNA + dimethylallyl diphosphate = N(6)-dimethylallyladenosine(37) in tRNA + diphosphate. Functionally, catalyzes the transfer of a dimethylallyl group onto the adenine at position 37 in tRNAs that read codons beginning with uridine, leading to the formation of N6-(dimethylallyl)adenosine (i(6)A). This chain is tRNA dimethylallyltransferase, found in Desulforamulus reducens (strain ATCC BAA-1160 / DSM 100696 / MI-1) (Desulfotomaculum reducens).